The following is a 183-amino-acid chain: ADP-ribosylation factor 3 (183 aa).

Glycine 2 carries N-myristoyl glycine lipidation. GTP contacts are provided by residues 24–31 (GLDKAGKT), 67–71 (DVGGQ), and 126–129 (NKQD).

The protein belongs to the small GTPase superfamily. Arf family. As to quaternary structure, interacts with RUD3.

It localises to the golgi apparatus. In terms of biological role, GTP-binding protein involved in protein trafficking; may modulate vesicle budding and uncoating within the Golgi apparatus. The chain is ADP-ribosylation factor 3 (ARF3) from Saccharomyces cerevisiae (strain ATCC 204508 / S288c) (Baker's yeast).